A 684-amino-acid polypeptide reads, in one-letter code: Suppressor of presenilin protein 3 (684 aa).

5 C2H2-type zinc fingers span residues 21 to 43, 48 to 71, 123 to 145, 261 to 283, and 291 to 313; these read YKCH…LRRH, FDCE…LQSH, YKCP…ILSH, YLCR…FRHH, and WTCI…VKMH. Disordered stretches follow at residues 337–359, 419–440, and 469–501; these read DLNK…HSDM, KNNS…SKSD, and TSKF…DQFQ. C2H2-type zinc fingers lie at residues 590-612 and 618-641; these read RECT…RDKH and HTCP…FVDH. The segment at 652–684 is disordered; it reads LPSSDSEDDNIPVPPDTPQRKKKAPKRGKRRGW. The segment covering 671–684 has biased composition (basic residues); that stretch reads RKKKAPKRGKRRGW.

The protein localises to the nucleus. Probable transcriptional regulator, which participates in the transcriptional repression of the presenilin protein hop-1. This chain is Suppressor of presenilin protein 3 (spr-3), found in Caenorhabditis elegans.